The chain runs to 310 residues: Protein A56 (310 aa).

A signal peptide spans 1–16 (MKQLSIVILLLSIVYT). Topologically, residues 17-275 (TKPHPTQISK…TKYTTSDFIE (259 aa)) are virion surface. Residues 19 to 121 (PHPTQISKKL…TNDTDKIDYE (103 aa)) form the Ig-like V-type domain. The cysteines at positions 36 and 105 are disulfide-linked. N39, N113, and N133 each carry an N-linked (GlcNAc...) asparagine; by host glycan. The disordered stretch occupies residues 153–195 (HTEEQHDSDTTICTSESTTQISETSESTTSSQISETSESTSYG). Positions 162–193 (TTICTSESTTQISETSESTTSSQISETSESTS) are enriched in low complexity. N203 is a glycosylation site (N-linked (GlcNAc...) asparagine; by host). Residues 276–300 (IFGIVSLILLLAVAIFCIIYYFCSG) form a helical membrane-spanning segment. Residues 301 to 310 (RSRKQETNIL) lie on the Intravirion side of the membrane.

As to quaternary structure, heterodimerizes with K2. The heterodimer A56/K2 interacts with components of the entry fusion complex A16 and G9. Interacts with K2 protein. Heterodimer with C3/VPC protein; disulfide-linked. Post-translationally, glycosylated; contains phosphate and sulfate-substituted glycans. O-glycosylation is required for hemagglutination and hemadsorption activities of infected cell membranes.

The protein resides in the virion membrane. Its subcellular location is the host membrane. In terms of biological role, prevents cell to cell fusion by interacting with and directing the viral K2 protein on the host plasma membrane. The A56-K2 complex associates with components of the entry fusion complex (EFC) presumably to avoid superinfection and syncytium formation. Via its interaction with C3/VCP protein, protects the infected cell and probably also the extracellular enveloped virus from complement attack. The protein is Protein A56 (HA) of Raccoon poxvirus (RCN).